The sequence spans 479 residues: MQNFEIIIGVENHVELKTNSKMFSPSKVSYGEVPNTLANEIDLAYPGTLPSVNKKAVELAVLACNALNMQIDTLLTFDRKNYFYPDLTKGFQITQQFNPIGRNGSLEIALENGNKKVIEIERLHIEEDTAKQVHKDNLTYLDYNRSGVGLIEIVTKPVLRNAEEACLYVEKLREILLFLNVSDVKMNEGSLRTDLNISLRPYGSDKFSNKVEIKNLNSISNIKKAVEFEINRQKEILLKNQIVEQQTRRYDDQTSSTILMRSKIDSIDYRYFREPNIFPIQLEKSWIKNVISNSPELADQKRIRYVNELGLTSEDANIILTSLEMTNFFEKTIKLTSNYNKVAKMLISEIQAKLNLENKTIDQIKLSPENLASVINLIDKNIISSKQTKVIMPIILDSNTETVEQIVERLNLKLITNKNEISKLLVNIINQNKELLEQYPTRPERVIKTIMGQLMKQTNGNVDPEIANQIVIKSIEQNL.

It belongs to the GatB/GatE family. GatB subfamily. As to quaternary structure, heterotrimer of A, B and C subunits.

It carries out the reaction L-glutamyl-tRNA(Gln) + L-glutamine + ATP + H2O = L-glutaminyl-tRNA(Gln) + L-glutamate + ADP + phosphate + H(+). The enzyme catalyses L-aspartyl-tRNA(Asn) + L-glutamine + ATP + H2O = L-asparaginyl-tRNA(Asn) + L-glutamate + ADP + phosphate + 2 H(+). Allows the formation of correctly charged Asn-tRNA(Asn) or Gln-tRNA(Gln) through the transamidation of misacylated Asp-tRNA(Asn) or Glu-tRNA(Gln) in organisms which lack either or both of asparaginyl-tRNA or glutaminyl-tRNA synthetases. The reaction takes place in the presence of glutamine and ATP through an activated phospho-Asp-tRNA(Asn) or phospho-Glu-tRNA(Gln). The polypeptide is Aspartyl/glutamyl-tRNA(Asn/Gln) amidotransferase subunit B (Mycoplasma capricolum subsp. capricolum (strain California kid / ATCC 27343 / NCTC 10154)).